A 326-amino-acid polypeptide reads, in one-letter code: tRNA uridine(34) hydroxylase (326 aa).

Residues 123-217 enclose the Rhodanese domain; that stretch reads SDPDVILVDT…YLEEVKQEES (95 aa). Catalysis depends on Cys177, which acts as the Cysteine persulfide intermediate.

This sequence belongs to the TrhO family.

The enzyme catalyses uridine(34) in tRNA + AH2 + O2 = 5-hydroxyuridine(34) in tRNA + A + H2O. Functionally, catalyzes oxygen-dependent 5-hydroxyuridine (ho5U) modification at position 34 in tRNAs. This is tRNA uridine(34) hydroxylase from Shewanella denitrificans (strain OS217 / ATCC BAA-1090 / DSM 15013).